Consider the following 406-residue polypeptide: Succinylornithine transaminase (406 aa).

Residue lysine 252 is modified to N6-(pyridoxal phosphate)lysine.

This sequence belongs to the class-III pyridoxal-phosphate-dependent aminotransferase family. AstC subfamily. Pyridoxal 5'-phosphate serves as cofactor.

It carries out the reaction N(2)-succinyl-L-ornithine + 2-oxoglutarate = N-succinyl-L-glutamate 5-semialdehyde + L-glutamate. Its pathway is amino-acid degradation; L-arginine degradation via AST pathway; L-glutamate and succinate from L-arginine: step 3/5. Its function is as follows. Catalyzes the transamination of N(2)-succinylornithine and alpha-ketoglutarate into N(2)-succinylglutamate semialdehyde and glutamate. Can also act as an acetylornithine aminotransferase. In Escherichia coli O17:K52:H18 (strain UMN026 / ExPEC), this protein is Succinylornithine transaminase.